Here is a 158-residue protein sequence, read N- to C-terminus: Protein-export protein SecB (158 aa).

The protein belongs to the SecB family. As to quaternary structure, homotetramer, a dimer of dimers. One homotetramer interacts with 1 SecA dimer.

The protein localises to the cytoplasm. In terms of biological role, one of the proteins required for the normal export of preproteins out of the cell cytoplasm. It is a molecular chaperone that binds to a subset of precursor proteins, maintaining them in a translocation-competent state. It also specifically binds to its receptor SecA. The sequence is that of Protein-export protein SecB from Anaplasma phagocytophilum (strain HZ).